The following is a 533-amino-acid chain: GMP synthase [glutamine-hydrolyzing] (533 aa).

One can recognise a Glutamine amidotransferase type-1 domain in the interval 25–215; sequence SIVIFDFGSQ…VFNICKCHAN (191 aa). Cys-102 acts as the Nucleophile in catalysis. Active-site residues include His-189 and Glu-191. The GMPS ATP-PPase domain occupies 216 to 408; sequence WTMGNYIQES…LGLPDEMIWR (193 aa). 243 to 249 provides a ligand contact to ATP; that stretch reads SGGVDSA.

As to quaternary structure, homodimer.

The enzyme catalyses XMP + L-glutamine + ATP + H2O = GMP + L-glutamate + AMP + diphosphate + 2 H(+). It participates in purine metabolism; GMP biosynthesis; GMP from XMP (L-Gln route): step 1/1. Its function is as follows. Catalyzes the synthesis of GMP from XMP. The sequence is that of GMP synthase [glutamine-hydrolyzing] from Dehalococcoides mccartyi (strain CBDB1).